The chain runs to 187 residues: MSDFEKLQETVYQLLELVGENPDREGLLDTPKRVAKMYQEVFSGLGRDPKDEFTAVFSEGHEEVVLVKDIPFHSMCEHHLLPFYGVAHVAYLPSNGKVTGLSKLARAVEVASKRPQLQERLTAQIATALDEALSPEGVFVMVEAEHMCMTMRGIKKPGSKTITTVAKGIYKENVHQRQEILSMIHHD.

Positions 76, 79, and 148 each coordinate Zn(2+).

It belongs to the GTP cyclohydrolase I family. As to quaternary structure, homomer.

The enzyme catalyses GTP + H2O = 7,8-dihydroneopterin 3'-triphosphate + formate + H(+). It functions in the pathway cofactor biosynthesis; 7,8-dihydroneopterin triphosphate biosynthesis; 7,8-dihydroneopterin triphosphate from GTP: step 1/1. The protein is GTP cyclohydrolase 1 of Streptococcus gordonii (strain Challis / ATCC 35105 / BCRC 15272 / CH1 / DL1 / V288).